Here is a 1183-residue protein sequence, read N- to C-terminus: MERNKFASKMSQHYTKTICIAVVLVAVLFSLSSAAAAGSGAAVSVQLEALLEFKNGVADDPLGVLAGWRVGKSGDGAVRGGALPRHCNWTGVACDGAGQVTSIQLPESKLRGALSPFLGNISTLQVIDLTSNAFAGGIPPQLGRLGELEQLVVSSNYFAGGIPSSLCNCSAMWALALNVNNLTGAIPSCIGDLSNLEIFEAYLNNLDGELPPSMAKLKGIMVVDLSCNQLSGSIPPEIGDLSNLQILQLYENRFSGHIPRELGRCKNLTLLNIFSNGFTGEIPGELGELTNLEVMRLYKNALTSEIPRSLRRCVSLLNLDLSMNQLAGPIPPELGELPSLQRLSLHANRLAGTVPASLTNLVNLTILELSENHLSGPLPASIGSLRNLRRLIVQNNSLSGQIPASISNCTQLANASMSFNLFSGPLPAGLGRLQSLMFLSLGQNSLAGDIPDDLFDCGQLQKLDLSENSFTGGLSRLVGQLGNLTVLQLQGNALSGEIPEEIGNMTKLISLKLGRNRFAGHVPASISNMSSLQLLDLGHNRLDGVFPAEVFELRQLTILGAGSNRFAGPIPDAVANLRSLSFLDLSSNMLNGTVPAALGRLDQLLTLDLSHNRLAGAIPGAVIASMSNVQMYLNLSNNAFTGAIPAEIGGLVMVQTIDLSNNQLSGGVPATLAGCKNLYSLDLSGNSLTGELPANLFPQLDLLTTLNISGNDLDGEIPADIAALKHIQTLDVSRNAFAGAIPPALANLTALRSLNLSSNTFEGPVPDGGVFRNLTMSSLQGNAGLCGGKLLAPCHGHAAGKKRVFSRTGLVILVVLIALSTLLLLMVATILLVSYRRYRRKRRAADIAGDSPEAAVVVPELRRFSYGQLAAATNSFDQGNVIGSSNLSTVYKGVLAGDADGGMVVAVKRLNLEQFPSKSDKCFLTELATLSRLRHKNLARVVGYAWEAGKIKALVLDYMVNGDLDGAIHGGAAAPPPAPSRWTVRERLRVCVSVAHGLVYLHSGYDFPVVHCDVKPSNVLLDGDWEARVSDFGTARMLGVHLPAAANAAAQSTATSSAFRGTVGYMAPEFAYMRTVSTKVDVFSFGVLAMELFTGRRPTGTIEEDGVPLTLQQLVDNAVSRGLDGVHAVLDPRMKVATEADLSTAADVLAVALSCAAFEPADRPDMGAVLSSLLKMSKLVGED.

Residues 1–41 form the signal peptide; sequence MERNKFASKMSQHYTKTICIAVVLVAVLFSLSSAAAAGSGA. Over 42–809 the chain is Extracellular; sequence AVSVQLEALL…GKKRVFSRTG (768 aa). An intrachain disulfide couples C87 to C94. N-linked (GlcNAc...) asparagine glycosylation is found at N88 and N120. 13 LRR repeats span residues 97 to 120, 121 to 145, 147 to 169, 171 to 193, 194 to 217, 218 to 241, 242 to 265, 267 to 289, 290 to 313, 315 to 337, 338 to 361, 363 to 385, and 386 to 409; these read AGQV…FLGN, ISTL…LGRL, ELEQ…LCNC, AMWA…IGDL, SNLE…MAKL, KGIM…IGDL, SNLQ…LGRC, NLTL…LGEL, TNLE…LRRC, SLLN…LGEL, PSLQ…LTNL, NLTI…IGSL, and RNLR…ISNC. C167 and C189 are joined by a disulfide. N-linked (GlcNAc...) asparagine glycosylation is found at N168 and N181. Residue N267 is glycosylated (N-linked (GlcNAc...) asparagine). N-linked (GlcNAc...) asparagine glycans are attached at residues N363, N395, N408, and N414. 14 LRR repeats span residues 433-457, 459-480, 481-505, 507-529, 530-553, 555-577, 578-600, 601-625, 627-651, 652-675, 676-699, 701-724, 725-748, and 749-773; these read LQSL…LFDC, QLQK…LVGQ, LGNL…IGNM, KLIS…ISNM, SSLQ…VFEL, QLTI…VANL, RSLS…ALGR, LDQL…VIAS, SNVQ…IGGL, VMVQ…LAGC, KNLY…LFPQ, DLLT…IAAL, KHIQ…LANL, and TALR…VFRN. N-linked (GlcNAc...) asparagine glycans are attached at residues N483, N504, and N528. N591 carries N-linked (GlcNAc...) asparagine glycosylation. N634 carries an N-linked (GlcNAc...) asparagine glycan. N707, N747, N755, and N773 each carry an N-linked (GlcNAc...) asparagine glycan. Residues 810–830 traverse the membrane as a helical segment; it reads LVILVVLIALSTLLLLMVATI. Over 831 to 1183 the chain is Cytoplasmic; sequence LLVSYRRYRR…LKMSKLVGED (353 aa). Residues 876 to 1179 form the Protein kinase domain; that stretch reads FDQGNVIGSS…LSSLLKMSKL (304 aa). ATP contacts are provided by residues 882-890 and K908; that span reads IGSSNLSTV. D1013 functions as the Proton acceptor in the catalytic mechanism.

Belongs to the protein kinase superfamily. Ser/Thr protein kinase family. As to quaternary structure, interacts with SERK2.

The protein localises to the cell membrane. It catalyses the reaction L-seryl-[protein] + ATP = O-phospho-L-seryl-[protein] + ADP + H(+). The enzyme catalyses L-threonyl-[protein] + ATP = O-phospho-L-threonyl-[protein] + ADP + H(+). In terms of biological role, constitutes the pattern-recognition receptor (PPR) that determines the specific perception of flagellin (flg22), a potent elicitor of the defense response to pathogen-associated molecular patterns (PAMPs). Recognizes flg22 from Pseudomonas aeruginosa and Acidovorax avenae. flg22 is a peptide derived from the bacterial flagellin N-terminus sequence. Does not recognize flg22 from Xanthomonas oryzae pv. oryzae (Xoo) or Xanthomonas oryzae pv. oryzicola (Xoc). This Oryza sativa subsp. japonica (Rice) protein is LRR receptor-like serine/threonine-protein kinase FLS2.